A 118-amino-acid polypeptide reads, in one-letter code: Secreted effector CSEP0064 (118 aa).

Positions 1–21 (MRPFQLLSALAIFINLEAVEA) are cleaved as a signal peptide. The cysteines at positions 27 and 113 are disulfide-linked.

In terms of assembly, interacts in planta with the pathogenesis-related protein PR10.

The protein resides in the secreted. The protein localises to the host cell. Its function is as follows. Secreted effector that increases susceptibility to infection in both monocotyledonous and dicotyledonous plants. Non-catalytic homolog of fungal RNases that binds host RNA and inhibits the degradation of host ribosomal RNA induced by ribosome-inactivating proteins (RIPs), preventing host cell death, an inviable interaction and demise of the fungus. The protein is Secreted effector CSEP0064 of Blumeria graminis f. sp. hordei (strain DH14) (Barley powdery mildew).